Here is a 49-residue protein sequence, read N- to C-terminus: Astexin-3 (49 aa).

A propeptide spanning residues 1–25 (MRTYNRSLPARAGLTDLGKVTTHTK) is cleaved from the precursor. The segment at residues 26–34 (GPTPMVGLD) is a cross-link (isoaspartyl glycine isopeptide (Gly-Asp)).

This lasso peptide is hydrolyzed to a linear form by the isopeptidase AtxE2, in vitro. The isopeptidase AtxE2 only recognizes the threaded form (but not the unthreaded form).

Its subcellular location is the cytoplasm. The protein localises to the secreted. Functionally, shows weak antimicrobial activity against its phylogenetic relative Caulobacter crescentus. Does not show activity against other bacteria tested (E.coli, Vibrio sp, Burkhoderia thailandensis, and Salmonella newport). This chain is Astexin-3, found in Asticcacaulis excentricus (strain ATCC 15261 / DSM 4724 / KCTC 12464 / NCIMB 9791 / VKM B-1370 / CB 48).